Reading from the N-terminus, the 600-residue chain is Probable tripeptidyl-peptidase SED4 (600 aa).

The first 22 residues, 1-22, serve as a signal peptide directing secretion; the sequence is MVSFTLRAIGACLIGLPALITA. A propeptide spans 23-202 (removed in mature form); that stretch reads APTSHVSNDF…SVFTSDLEIT (180 aa). N-linked (GlcNAc...) asparagine glycosylation is found at Asn210 and Asn281. The Peptidase S53 domain occupies 212–600; sequence TITPDCIREL…FEKLSKLVLI (389 aa). Active-site charge relay system residues include Glu288 and Asp292. Residues Asn323 and Asn404 are each glycosylated (N-linked (GlcNAc...) asparagine). Ser504 acts as the Charge relay system in catalysis. Positions 546 and 547 each coordinate Ca(2+). A glycan (N-linked (GlcNAc...) asparagine) is linked at Asn575. Gly579 and Asp581 together coordinate Ca(2+).

Ca(2+) serves as cofactor.

The protein localises to the secreted. It is found in the extracellular space. It carries out the reaction Release of an N-terminal tripeptide from a polypeptide.. Secreted tripeptidyl-peptidase which degrades proteins at acidic pHs and is involved in virulence. The sequence is that of Probable tripeptidyl-peptidase SED4 (SED4) from Arthroderma benhamiae (strain ATCC MYA-4681 / CBS 112371) (Trichophyton mentagrophytes).